The sequence spans 793 residues: Probable exo-1,4-beta-xylosidase xlnD (793 aa).

Positions 1 to 20 (MPRVASVAAVLAALLPSALG) are cleaved as a signal peptide. N-linked (GlcNAc...) asparagine glycans are attached at residues Asn23, Asn87, and Asn142. Asp310 is an active-site residue. N-linked (GlcNAc...) asparagine glycosylation is found at Asn326, Asn385, Asn404, Asn440, Asn477, Asn518, Asn559, Asn614, Asn652, Asn679, and Asn701.

The protein belongs to the glycosyl hydrolase 3 family.

The protein localises to the secreted. The catalysed reaction is Hydrolysis of (1-&gt;4)-beta-D-xylans, to remove successive D-xylose residues from the non-reducing termini.. Its pathway is glycan degradation; xylan degradation. Its function is as follows. Xylan 1,4-beta-xylosidase involved in the hydrolysis of xylan, a major structural heterogeneous polysaccharide found in plant biomass representing the second most abundant polysaccharide in the biosphere, after cellulose. The polypeptide is Probable exo-1,4-beta-xylosidase xlnD (xlnD) (Aspergillus terreus (strain NIH 2624 / FGSC A1156)).